Here is a 504-residue protein sequence, read N- to C-terminus: Probable ergothioneine transporter EgtUBC (504 aa).

An ABC transmembrane type-1 domain is found at 19–198 (MIEHIQISFI…LLAIIFDLIL (180 aa)). A run of 6 helical transmembrane segments spans residues 25–45 (ISFI…ILLT), 49–69 (TISE…SLAL), 70–90 (LGLM…ALVV), 145–165 (AMVL…GGLG), 178–198 (SLIL…DLIL), and 209–229 (LLMT…IPMF). The segment at 231–504 (QKGDKITLAG…DYLKAKGLIK (274 aa)) is ergothioneine binding domain.

In the N-terminal section; belongs to the binding-protein-dependent transport system permease family. This sequence in the C-terminal section; belongs to the OsmX family. As to quaternary structure, the complex is probably composed of at least an ATP-binding protein (EgtUA) and a transmembrane protein (EgtUBC).

It is found in the membrane. Functionally, part of an ABC transporter complex EgtU required for the uptake of ergothioneine (EGT), a natural low-molecular weight (LMW) thiol antioxidant. Responsible for the translocation of the substrate across the membrane. Also contains a C-terminal periplasmic solute-binding domain (SBD) which binds to EGT with sub-micromolar affinity. Probably does not bind L-hercynine. The chain is Probable ergothioneine transporter EgtUBC (egtUBC) from Staphylococcus aureus (strain USA300).